A 228-amino-acid chain; its full sequence is MSRAGNRGNTQARWLGTGLLGLFLLPMYLSLEVSVGKATTIYAINGSSILLPCTFSSCYGFENLYFKWSYNNSETSRILIDGIVKNDKSDPKVRVKDDDRITLEGSTKEKTNNISILLSDLEFSDTGRYTCFVRNPKEKDLNNSATIFLQVVDKLEKVDNTVTLIILAVVGGVIGLLVCILLLKKLITFILKKTREKKKECLVSSSGNDNTENGLPGSKAEEKPPTKV.

Residues 1–30 (MSRAGNRGNTQARWLGTGLLGLFLLPMYLS) form the signal peptide. The Ig-like C2-type domain maps to 31 to 148 (LEVSVGKATT…KDLNNSATIF (118 aa)). The Extracellular segment spans residues 31–161 (LEVSVGKATT…VDKLEKVDNT (131 aa)). N-linked (GlcNAc...) asparagine glycans are attached at residues asparagine 45, asparagine 71, asparagine 113, and asparagine 142. A disulfide bridge links cysteine 53 with cysteine 131. Residues 162 to 182 (VTLIILAVVGGVIGLLVCILL) traverse the membrane as a helical segment. Residues 183-228 (LKKLITFILKKTREKKKECLVSSSGNDNTENGLPGSKAEEKPPTKV) are Cytoplasmic-facing. The disordered stretch occupies residues 199-228 (KECLVSSSGNDNTENGLPGSKAEEKPPTKV). The segment covering 203 to 213 (VSSSGNDNTEN) has biased composition (polar residues). The segment covering 219-228 (KAEEKPPTKV) has biased composition (basic and acidic residues).

This sequence belongs to the sodium channel auxiliary subunit SCN4B (TC 8.A.17) family. In terms of assembly, a voltage-gated sodium (Nav) channel consists of an ion-conducting pore-forming alpha subunit functional on its own that is regulated by one or more beta subunits. The beta subunit SCN4B is disulfide-linked to the pore-forming alpha subunit. Interacts with SCN1A; regulatory subunit of SCN1A/Nav1.1. Interacts with SCN2A; regulatory subunit of SCN2A/Nav1.2. Post-translationally, contains an interchain disulfide bond with SCN2A.

The protein resides in the cell membrane. Functionally, regulatory subunit of multiple voltage-gated sodium (Nav) channels directly mediating the depolarization of excitable membranes. Navs, also called VGSCs (voltage-gated sodium channels) or VDSCs (voltage-dependent sodium channels), operate by switching between closed and open conformations depending on the voltage difference across the membrane. In the open conformation they allow Na(+) ions to selectively pass through the pore, along their electrochemical gradient. The influx of Na+ ions provokes membrane depolarization, initiating the propagation of electrical signals throughout cells and tissues. The accessory beta subunits participate in localization and functional modulation of the Nav channels. Modulates the activity of SCN1A/Nav1.1. Modulates the activity of SCN2A/Nav1.2. In Mus musculus (Mouse), this protein is Sodium channel regulatory subunit beta-4.